A 108-amino-acid chain; its full sequence is Holo-[acyl-carrier-protein] synthase (108 aa).

Mg(2+) is bound by residues aspartate 9 and glutamate 52.

It belongs to the P-Pant transferase superfamily. AcpS family. It depends on Mg(2+) as a cofactor.

Its subcellular location is the cytoplasm. It catalyses the reaction apo-[ACP] + CoA = holo-[ACP] + adenosine 3',5'-bisphosphate + H(+). Functionally, transfers the 4'-phosphopantetheine moiety from coenzyme A to a Ser of acyl-carrier-protein. The protein is Holo-[acyl-carrier-protein] synthase of Coprothermobacter proteolyticus (strain ATCC 35245 / DSM 5265 / OCM 4 / BT).